The primary structure comprises 102 residues: Small ribosomal subunit protein uS10 (102 aa).

This sequence belongs to the universal ribosomal protein uS10 family. In terms of assembly, part of the 30S ribosomal subunit.

Functionally, involved in the binding of tRNA to the ribosomes. This Methanococcus maripaludis (strain C7 / ATCC BAA-1331) protein is Small ribosomal subunit protein uS10.